The following is a 414-amino-acid chain: Serine--tRNA ligase (414 aa).

Position 230 to 232 (230 to 232 (TAE)) interacts with L-serine. 261–263 (RKE) contacts ATP. Glu-284 is a binding site for L-serine. 348 to 351 (EISS) is an ATP binding site. Ser-382 lines the L-serine pocket.

It belongs to the class-II aminoacyl-tRNA synthetase family. Type-1 seryl-tRNA synthetase subfamily. Homodimer. The tRNA molecule binds across the dimer.

It localises to the cytoplasm. It carries out the reaction tRNA(Ser) + L-serine + ATP = L-seryl-tRNA(Ser) + AMP + diphosphate + H(+). It catalyses the reaction tRNA(Sec) + L-serine + ATP = L-seryl-tRNA(Sec) + AMP + diphosphate + H(+). The protein operates within aminoacyl-tRNA biosynthesis; selenocysteinyl-tRNA(Sec) biosynthesis; L-seryl-tRNA(Sec) from L-serine and tRNA(Sec): step 1/1. Catalyzes the attachment of serine to tRNA(Ser). Is also able to aminoacylate tRNA(Sec) with serine, to form the misacylated tRNA L-seryl-tRNA(Sec), which will be further converted into selenocysteinyl-tRNA(Sec). The polypeptide is Serine--tRNA ligase (Sulfurovum sp. (strain NBC37-1)).